We begin with the raw amino-acid sequence, 274 residues long: tRNA pseudouridine synthase A (274 aa).

Asp-57 acts as the Nucleophile in catalysis. Tyr-115 provides a ligand contact to substrate.

The protein belongs to the tRNA pseudouridine synthase TruA family. In terms of assembly, homodimer.

It catalyses the reaction uridine(38/39/40) in tRNA = pseudouridine(38/39/40) in tRNA. Functionally, formation of pseudouridine at positions 38, 39 and 40 in the anticodon stem and loop of transfer RNAs. The chain is tRNA pseudouridine synthase A from Frankia casuarinae (strain DSM 45818 / CECT 9043 / HFP020203 / CcI3).